Consider the following 223-residue polypeptide: Translation initiation factor 6 (223 aa).

Belongs to the eIF-6 family.

In terms of biological role, binds to the 50S ribosomal subunit and prevents its association with the 30S ribosomal subunit to form the 70S initiation complex. This Sulfolobus acidocaldarius (strain ATCC 33909 / DSM 639 / JCM 8929 / NBRC 15157 / NCIMB 11770) protein is Translation initiation factor 6.